Here is a 612-residue protein sequence, read N- to C-terminus: Heparan-sulfate 6-O-sulfotransferase 2 (612 aa).

Residues 1 to 4 (MALP) lie on the Cytoplasmic side of the membrane. Residues 5-27 (AFAARALGPPLQPEQGAPARTTC) form a helical; Signal-anchor for type II membrane protein membrane-spanning segment. Residues 9-52 (RALGPPLQPEQGAPARTTCPRRHSRVEAELAASRPGSVAASVRA) form a disordered region. Topologically, residues 28-612 (PRRHSRVEAE…DYIGSVETWR (585 aa)) are lumenal. Asn-209 carries an N-linked (GlcNAc...) asparagine glycan. 233 to 241 (HIQKTGGTT) contributes to the 3'-phosphoadenylyl sulfate binding site. Substrate-binding positions include 263–264 (KK), Arg-280, Trp-285, and His-290. The active-site Proton acceptor is His-290. Residues Arg-325 and Ser-333 each coordinate 3'-phosphoadenylyl sulfate. Residues His-337 and Trp-344 each coordinate substrate. N-linked (GlcNAc...) asparagine glycosylation is present at Asn-404. A 3'-phosphoadenylyl sulfate-binding site is contributed by 457–459 (TQY). An N-linked (GlcNAc...) asparagine glycan is attached at Asn-460. 463 to 464 (RA) lines the 3'-phosphoadenylyl sulfate pocket. The segment at 529–612 (HFQSQSQGQS…DYIGSVETWR (84 aa)) is disordered. Positions 531–564 (QSQSQGQSQSQSPGQNLSQNPNPNPNQNLTQNLS) are enriched in low complexity. N-linked (GlcNAc...) asparagine glycosylation is found at Asn-546, Asn-558, Asn-562, Asn-574, and Asn-599. Over residues 565–577 (HNLTPSSNPNSTQ) the composition is skewed to polar residues.

The protein belongs to the sulfotransferase 6 family.

Its subcellular location is the membrane. It carries out the reaction alpha-D-glucosaminyl-[heparan sulfate](n) + 3'-phosphoadenylyl sulfate = 6-sulfo-alpha-D-glucosaminyl-[heparan sulfate](n) + adenosine 3',5'-bisphosphate + H(+). In terms of biological role, 6-O-sulfation enzyme which catalyzes the transfer of sulfate from 3'-phosphoadenosine 5'-phosphosulfate (PAPS) to position 6 of the N-sulfoglucosamine residue (GlcNS) of heparan sulfate. The chain is Heparan-sulfate 6-O-sulfotransferase 2 (Hs6st2) from Mus musculus (Mouse).